Here is a 122-residue protein sequence, read N- to C-terminus: Large ribosomal subunit protein uL14c (122 aa).

The protein belongs to the universal ribosomal protein uL14 family. In terms of assembly, part of the 50S ribosomal subunit.

Its subcellular location is the plastid. It localises to the chloroplast. Functionally, binds to 23S rRNA. The chain is Large ribosomal subunit protein uL14c from Ipomoea purpurea (Common morning glory).